A 349-amino-acid polypeptide reads, in one-letter code: tRNA pseudouridine synthase D (349 aa).

Phe26 contacts substrate. Catalysis depends on Asp79, which acts as the Nucleophile. Asn128 serves as a coordination point for substrate. One can recognise a TRUD domain in the interval 154–302; it reads GVPNYFGSQR…VEGSRRAVLL (149 aa). Phe328 contributes to the substrate binding site.

The protein belongs to the pseudouridine synthase TruD family.

The enzyme catalyses uridine(13) in tRNA = pseudouridine(13) in tRNA. In terms of biological role, responsible for synthesis of pseudouridine from uracil-13 in transfer RNAs. This Yersinia pestis bv. Antiqua (strain Antiqua) protein is tRNA pseudouridine synthase D.